A 119-amino-acid chain; its full sequence is Ribosome-binding factor A (119 aa).

Belongs to the RbfA family. Monomer. Binds 30S ribosomal subunits, but not 50S ribosomal subunits or 70S ribosomes.

It is found in the cytoplasm. One of several proteins that assist in the late maturation steps of the functional core of the 30S ribosomal subunit. Associates with free 30S ribosomal subunits (but not with 30S subunits that are part of 70S ribosomes or polysomes). Required for efficient processing of 16S rRNA. May interact with the 5'-terminal helix region of 16S rRNA. The protein is Ribosome-binding factor A of Pseudothermotoga lettingae (strain ATCC BAA-301 / DSM 14385 / NBRC 107922 / TMO) (Thermotoga lettingae).